The following is a 1755-amino-acid chain: Transposon Ty1-BL Gag-Pol polyprotein (1755 aa).

Polar residues-rich tracts occupy residues 20 to 31 (SVTSKEVQTTQD), 46 to 55 (VSTQANSQQP), and 137 to 168 (VGTHLNTPSPESGNSFPDSSSAKSNMTSTNQH). Disordered stretches follow at residues 20–84 (SVTS…QNGP), 137–173 (VGTHLNTPSPESGNSFPDSSSAKSNMTSTNQHVRPPP), and 350–420 (QQES…IRGS). The RNA-binding stretch occupies residues 299–401 (NNGIPINNKV…NSQSRTARAH (103 aa)). A compositionally biased stretch (basic and acidic residues) spans 363 to 372 (SPSDEKKDSR). Polar residues predominate over residues 373-411 (TYTNTTKPKSITRNSQKPNNSQSRTARAHNVSTFNNSPG). The active-site For protease activity; shared with dimeric partner is Asp461. Positions 583–640 (NVHTSESTRKYPYPFIHRMLAHANAQTIRYSLKNNTITYFNESDVDWSSAIDYQCPDC) are integrase-type zinc finger-like. Residues 660-835 (NSYEPFQYLH…AGLDISTLLP (176 aa)) form the Integrase catalytic domain. The Mg(2+) site is built by Asp671 and Asp736. The segment at 956 to 1172 (SKAVSPTDST…LGGIGDSNAY (217 aa)) is disordered. Over residues 960–969 (SPTDSTPPST) the composition is skewed to low complexity. 2 stretches are compositionally biased toward polar residues: residues 1005–1017 (STPQISDIESTDS) and 1031–1043 (MSQSNTHESSYAS). The segment covering 1044–1053 (KSKDFRHSDS) has biased composition (basic and acidic residues). Polar residues-rich tracts occupy residues 1054–1082 (YSDNETNHTNVPISSTGGTNNKTVPQTSE) and 1095–1106 (SIDTSSSESNSL). A Bipartite nuclear localization signal motif is present at residues 1178-1212 (KKRSLEDNETEIKVSRDTWNTKNMRSLEPPRSKKR). The 139-residue stretch at 1338–1476 (NNYHITQLDI…DILGLEIKYQ (139 aa)) folds into the Reverse transcriptase Ty1/copia-type domain. Mg(2+)-binding residues include Asp1346, Asp1427, Asp1428, Asp1610, Glu1652, and Asp1685. The region spanning 1610–1752 (DASYGNQPYY…IKTFKLLTNK (143 aa)) is the RNase H Ty1/copia-type domain.

The capsid protein forms a homotrimer, from which the VLPs are assembled. The protease is a homodimer, whose active site consists of two apposed aspartic acid residues. Initially, virus-like particles (VLPs) are composed of the structural unprocessed proteins Gag and Gag-Pol, and also contain the host initiator methionine tRNA (tRNA(i)-Met) which serves as a primer for minus-strand DNA synthesis, and a dimer of genomic Ty RNA. Processing of the polyproteins occurs within the particle and proceeds by an ordered pathway, called maturation. First, the protease (PR) is released by autocatalytic cleavage of the Gag-Pol polyprotein yielding capsid protein p45 and a Pol-p154 precursor protein. This cleavage is a prerequisite for subsequent processing of Pol-p154 at the remaining sites to release the mature structural and catalytic proteins. Maturation takes place prior to the RT reaction and is required to produce transposition-competent VLPs.

The protein resides in the cytoplasm. It localises to the nucleus. The enzyme catalyses DNA(n) + a 2'-deoxyribonucleoside 5'-triphosphate = DNA(n+1) + diphosphate. The catalysed reaction is Endonucleolytic cleavage to 5'-phosphomonoester.. Capsid protein (CA) is the structural component of the virus-like particle (VLP), forming the shell that encapsulates the retrotransposons dimeric RNA genome. The particles are assembled from trimer-clustered units and there are holes in the capsid shells that allow for the diffusion of macromolecules. CA also has nucleocapsid-like chaperone activity, promoting primer tRNA(i)-Met annealing to the multipartite primer-binding site (PBS), dimerization of Ty1 RNA and initiation of reverse transcription. Functionally, the aspartyl protease (PR) mediates the proteolytic cleavages of the Gag and Gag-Pol polyproteins after assembly of the VLP. In terms of biological role, reverse transcriptase/ribonuclease H (RT) is a multifunctional enzyme that catalyzes the conversion of the retro-elements RNA genome into dsDNA within the VLP. The enzyme displays a DNA polymerase activity that can copy either DNA or RNA templates, and a ribonuclease H (RNase H) activity that cleaves the RNA strand of RNA-DNA heteroduplexes during plus-strand synthesis and hydrolyzes RNA primers. The conversion leads to a linear dsDNA copy of the retrotransposon that includes long terminal repeats (LTRs) at both ends. Its function is as follows. Integrase (IN) targets the VLP to the nucleus, where a subparticle preintegration complex (PIC) containing at least integrase and the newly synthesized dsDNA copy of the retrotransposon must transit the nuclear membrane. Once in the nucleus, integrase performs the integration of the dsDNA into the host genome. This Saccharomyces cerevisiae (strain ATCC 204508 / S288c) (Baker's yeast) protein is Transposon Ty1-BL Gag-Pol polyprotein (TY1B-BL).